The chain runs to 1578 residues: FH1/FH2 domain-containing protein 3 (1578 aa).

The 388-residue stretch at 18–405 (NSTNFPEPSR…DLCEKDEEEE (388 aa)) folds into the GBD/FH3 domain. Disordered regions lie at residues 324 to 518 (HEDG…DKLP), 535 to 824 (SPLL…GVNG), 915 to 942 (VGRGAISPDVESQDKVPDTPPAQLKTES), 979 to 1013 (LGHREAPGPPPPPPPTFLGLPPPPPPPLLDSVPPP), 1418 to 1462 (QQKQ…YAED), 1490 to 1514 (RTRSRASRGSTSSWTMGTEESPSVT), and 1528 to 1565 (SATQVPSQRVVPRERKRSRANRKSLRRTLKSGLTPEEA). Phosphoserine is present on residues Ser345 and Ser376. Positions 368 to 383 (IQNIKSPLSAPTSPCS) are enriched in polar residues. Positions 399-425 (EKDEEEEEEEEQPITEPNSEEEREDDA) are enriched in acidic residues. Thr413 bears the Phosphothreonine mark. The segment covering 434–446 (ASSASGQSSPGKD) has biased composition (low complexity). Over residues 453–473 (ALHTTSSPTSQGRWLSASTAA) the composition is skewed to polar residues. Residues 553–583 (SNFSSNSFQSSRPSPGPSGSPSYASSFSSPQ) are compositionally biased toward low complexity. The segment covering 584 to 598 (DTRSSPSGLLTSSFR) has biased composition (polar residues). Residues 597–645 (FRQHQESLAAERERRRQEREERLQRIEREERNKFNREYLDKREEQRQAR) adopt a coiled-coil conformation. Residues 599 to 651 (QHQESLAAERERRRQEREERLQRIEREERNKFNREYLDKREEQRQARGERYKY) are compositionally biased toward basic and acidic residues. Composition is skewed to low complexity over residues 675-684 (DLSLDLSLPA) and 692-701 (SSQSPSADSQ). Residues 751–761 (SQEEPVLELEP) show a composition bias toward acidic residues. Basic and acidic residues predominate over residues 762–782 (EERASLSEKERQNEEVNERDN). The segment covering 784 to 793 (SASSISSSSS) has biased composition (low complexity). Over residues 795–809 (LEREEKEDKLSEDRA) the composition is skewed to basic and acidic residues. A Phosphoserine modification is found at Ser921. Thr933 carries the post-translational modification Phosphothreonine. Pro residues predominate over residues 985–1013 (PGPPPPPPPTFLGLPPPPPPPLLDSVPPP). Residues 985 to 1016 (PGPPPPPPPTFLGLPPPPPPPLLDSVPPPPVP) form the FH1 domain. Residues 1039–1435 (GQPAFTKKKK…HRERNKTRGK (397 aa)) form the FH2 domain. Basic residues predominate over residues 1420 to 1434 (KQKRANHRERNKTRG). Positions 1444 to 1456 (SGSSPAAPSQPQG) are enriched in low complexity. Residues 1515 to 1547 (DDAADEIMDRIVKSATQVPSQRVVPRERKRSRA) enclose the DAD domain. The segment covering 1541-1556 (ERKRSRANRKSLRRTL) has biased composition (basic residues).

This sequence belongs to the formin homology family. As to quaternary structure, interacts with nestin/NES-based interfilament (IF). Interacts with SQSTM1. Expressed in the heart, including left ventricle, kidney, brain and skeletal muscle, including soleus and tibialis anterior (at protein level).

Its subcellular location is the cytoplasm. The protein resides in the cytoskeleton. It is found in the myofibril. The protein localises to the sarcomere. It localises to the z line. Functionally, may play a role in actin filament polymerization in cardiomyocytes. Actin-organizing protein that may cause stress fiber formation together with cell elongation. The protein is FH1/FH2 domain-containing protein 3 (Fhod3) of Mus musculus (Mouse).